A 388-amino-acid chain; its full sequence is Putative 8-amino-7-oxononanoate synthase (388 aa).

Residue Arg18 coordinates substrate. Residue 105–106 (GY) coordinates pyridoxal 5'-phosphate. His130 contributes to the substrate binding site. Pyridoxal 5'-phosphate contacts are provided by residues Ser176, 201–204 (DDAH), and 232–235 (TLSK). Lys235 carries the N6-(pyridoxal phosphate)lysine modification. Residue Thr349 participates in substrate binding.

It belongs to the class-II pyridoxal-phosphate-dependent aminotransferase family. BioF subfamily. Homodimer. Pyridoxal 5'-phosphate serves as cofactor.

The catalysed reaction is 6-carboxyhexanoyl-[ACP] + L-alanine + H(+) = (8S)-8-amino-7-oxononanoate + holo-[ACP] + CO2. Its pathway is cofactor biosynthesis; biotin biosynthesis. Catalyzes the decarboxylative condensation of pimeloyl-[acyl-carrier protein] and L-alanine to produce 8-amino-7-oxononanoate (AON), [acyl-carrier protein], and carbon dioxide. This is Putative 8-amino-7-oxononanoate synthase (bioF) from Acetivibrio thermocellus (strain ATCC 27405 / DSM 1237 / JCM 9322 / NBRC 103400 / NCIMB 10682 / NRRL B-4536 / VPI 7372) (Clostridium thermocellum).